A 415-amino-acid polypeptide reads, in one-letter code: Serine/threonine transporter SstT (415 aa).

Transmembrane regions (helical) follow at residues 15-35 (GSLV…AWLA), 45-65 (LGTL…WILV), 85-105 (ILYI…SFIF), 142-162 (ALLN…GIAL), 193-213 (VGIF…ALLG), 217-237 (LLVV…PLIV), 301-321 (GAAV…GIPV), and 331-351 (VVSA…LLLI).

The protein belongs to the dicarboxylate/amino acid:cation symporter (DAACS) (TC 2.A.23) family.

Its subcellular location is the cell inner membrane. It catalyses the reaction L-serine(in) + Na(+)(in) = L-serine(out) + Na(+)(out). The enzyme catalyses L-threonine(in) + Na(+)(in) = L-threonine(out) + Na(+)(out). Involved in the import of serine and threonine into the cell, with the concomitant import of sodium (symport system). The protein is Serine/threonine transporter SstT of Photorhabdus laumondii subsp. laumondii (strain DSM 15139 / CIP 105565 / TT01) (Photorhabdus luminescens subsp. laumondii).